The chain runs to 357 residues: EGF-like domain-containing protein 2 (357 aa).

The first 20 residues, M1–C20, serve as a signal peptide directing secretion. EGF-like domains follow at residues S21–G55 and I61–Q93. 6 disulfides stabilise this stretch: C24–C37, C31–C43, C45–C54, C65–C75, C69–C81, and C83–C92.

In terms of tissue distribution, prismatic layer of shell (at protein level). Expressed primarily in the mantle with highest level in the mantle edge and lower level in the mantle pallium.

It localises to the secreted. The polypeptide is EGF-like domain-containing protein 2 (Pinctada maxima (Silver-lipped pearl oyster)).